A 183-amino-acid chain; its full sequence is Oleosin Bn-V (183 aa).

Residues 1-47 (PARTHHDITTRDQYPLISRDRDQYGMIGRDQYNMSGQNYSKSRQIAK) form a polar region. Repeats lie at residues 11–20 (RDQYPLISRD) and 21–30 (RDQYGMIGRD). The segment at 48-119 (ATTAVTAGDS…AAITVFSWIY (72 aa)) is hydrophobic. The next 2 membrane-spanning stretches (helical) occupy residues 57-77 (SLLV…IVAT) and 99-119 (TGFL…SWIY). The segment at 154-183 (YGQQHTGEEHDRDRDHRTDRDRTRGTQHTT) is disordered. The segment covering 159–177 (TGEEHDRDRDHRTDRDRTR) has biased composition (basic and acidic residues).

It belongs to the oleosin family.

It localises to the lipid droplet. Its subcellular location is the membrane. In terms of biological role, may have a structural role to stabilize the lipid body during desiccation of the seed by preventing coalescence of the oil. Probably interacts with both lipid and phospholipid moieties of lipid bodies. May also provide recognition signals for specific lipase anchorage in lipolysis during seedling growth. The polypeptide is Oleosin Bn-V (Brassica napus (Rape)).